A 46-amino-acid polypeptide reads, in one-letter code: Protein PsbN (46 aa).

A helical transmembrane segment spans residues 10-30 (VSIAVLTALLGLTGFGIYTAF).

The protein belongs to the PsbN family.

Its subcellular location is the cellular thylakoid membrane. Its function is as follows. May play a role in photosystem I and II biogenesis. This is Protein PsbN from Synechococcus sp. (strain RCC307).